The chain runs to 427 residues: Tyrosine--tRNA ligase (427 aa).

Residue Tyr33 coordinates L-tyrosine. The 'HIGH' region signature appears at 38–47 (PTASSLTIGN). L-tyrosine-binding residues include Tyr168 and Gln172. Positions 228–232 (KFGKS) match the 'KMSKS' region motif. Lys231 is a binding site for ATP. Residues 361–427 (LDLLSTLTNS…KKNYYLLRFN (67 aa)) enclose the S4 RNA-binding domain.

This sequence belongs to the class-I aminoacyl-tRNA synthetase family. TyrS type 1 subfamily. In terms of assembly, homodimer.

The protein resides in the cytoplasm. The catalysed reaction is tRNA(Tyr) + L-tyrosine + ATP = L-tyrosyl-tRNA(Tyr) + AMP + diphosphate + H(+). Its function is as follows. Catalyzes the attachment of tyrosine to tRNA(Tyr) in a two-step reaction: tyrosine is first activated by ATP to form Tyr-AMP and then transferred to the acceptor end of tRNA(Tyr). This chain is Tyrosine--tRNA ligase, found in Cytophaga hutchinsonii (strain ATCC 33406 / DSM 1761 / CIP 103989 / NBRC 15051 / NCIMB 9469 / D465).